Reading from the N-terminus, the 343-residue chain is Anthranilate phosphoribosyltransferase (343 aa).

5-phospho-alpha-D-ribose 1-diphosphate contacts are provided by residues G85, 88 to 89 (GD), T93, 95 to 98 (NIST), 113 to 121 (KHGGRSVSS), and A125. G85 contributes to the anthranilate binding site. S97 is a binding site for Mg(2+). R171 contacts anthranilate. D230 and E231 together coordinate Mg(2+).

It belongs to the anthranilate phosphoribosyltransferase family. Homodimer. Mg(2+) serves as cofactor.

The catalysed reaction is N-(5-phospho-beta-D-ribosyl)anthranilate + diphosphate = 5-phospho-alpha-D-ribose 1-diphosphate + anthranilate. It participates in amino-acid biosynthesis; L-tryptophan biosynthesis; L-tryptophan from chorismate: step 2/5. Catalyzes the transfer of the phosphoribosyl group of 5-phosphorylribose-1-pyrophosphate (PRPP) to anthranilate to yield N-(5'-phosphoribosyl)-anthranilate (PRA). This chain is Anthranilate phosphoribosyltransferase, found in Aromatoleum aromaticum (strain DSM 19018 / LMG 30748 / EbN1) (Azoarcus sp. (strain EbN1)).